The primary structure comprises 205 residues: dTTP/UTP pyrophosphatase (205 aa).

The active-site Proton acceptor is the aspartate 66.

The protein belongs to the Maf family. YhdE subfamily. A divalent metal cation serves as cofactor.

The protein resides in the cytoplasm. It catalyses the reaction dTTP + H2O = dTMP + diphosphate + H(+). It carries out the reaction UTP + H2O = UMP + diphosphate + H(+). In terms of biological role, nucleoside triphosphate pyrophosphatase that hydrolyzes dTTP and UTP. May have a dual role in cell division arrest and in preventing the incorporation of modified nucleotides into cellular nucleic acids. This is dTTP/UTP pyrophosphatase from Anaeromyxobacter sp. (strain Fw109-5).